Here is a 138-residue protein sequence, read N- to C-terminus: ATP synthase epsilon chain (138 aa).

It belongs to the ATPase epsilon chain family. As to quaternary structure, F-type ATPases have 2 components, CF(1) - the catalytic core - and CF(0) - the membrane proton channel. CF(1) has five subunits: alpha(3), beta(3), gamma(1), delta(1), epsilon(1). CF(0) has three main subunits: a, b and c.

The protein resides in the cell membrane. Its function is as follows. Produces ATP from ADP in the presence of a proton gradient across the membrane. The chain is ATP synthase epsilon chain (atpC) from Buchnera aphidicola subsp. Schizaphis graminum (strain Sg).